A 525-amino-acid polypeptide reads, in one-letter code: uncharacterized protein (525 aa).

Transmembrane regions (helical) follow at residues 7 to 29 (FLAT…LGQI), 34 to 51 (LRFG…VGAL), 64 to 82 (GLGV…GSTF), 92 to 114 (LMLA…GRLF), 121 to 143 (VAGL…ATHG), and 148 to 170 (LVGY…AIIA). RCK C-terminal domains lie at 178–257 (KDNT…LGHV) and 259–341 (ERTL…LFGD). 5 helical membrane passes run 351–370 (ALSL…LMVA), 374–396 (GLQF…GSIH), 416–438 (LGLM…SQAV), 443–465 (LAVI…AAAW), and 502–524 (SAYG…VIVL).

The protein belongs to the AAE transporter (TC 2.A.81) family.

The protein localises to the cell membrane. This is an uncharacterized protein from Cutibacterium acnes (strain DSM 16379 / KPA171202) (Propionibacterium acnes).